Consider the following 429-residue polypeptide: Histidine--tRNA ligase (429 aa).

It belongs to the class-II aminoacyl-tRNA synthetase family. Homodimer.

It is found in the cytoplasm. The enzyme catalyses tRNA(His) + L-histidine + ATP = L-histidyl-tRNA(His) + AMP + diphosphate + H(+). The polypeptide is Histidine--tRNA ligase (Streptococcus pneumoniae serotype 4 (strain ATCC BAA-334 / TIGR4)).